Consider the following 601-residue polypeptide: Elongation factor 4 (601 aa).

In terms of domain architecture, tr-type G spans 6–188 (AHIRNFSIIA…QIVRKVPPPK (183 aa)). GTP-binding positions include 18–23 (DHGKST) and 135–138 (NKVD).

It belongs to the TRAFAC class translation factor GTPase superfamily. Classic translation factor GTPase family. LepA subfamily.

The protein localises to the cell inner membrane. It catalyses the reaction GTP + H2O = GDP + phosphate + H(+). Required for accurate and efficient protein synthesis under certain stress conditions. May act as a fidelity factor of the translation reaction, by catalyzing a one-codon backward translocation of tRNAs on improperly translocated ribosomes. Back-translocation proceeds from a post-translocation (POST) complex to a pre-translocation (PRE) complex, thus giving elongation factor G a second chance to translocate the tRNAs correctly. Binds to ribosomes in a GTP-dependent manner. This chain is Elongation factor 4, found in Anaeromyxobacter sp. (strain Fw109-5).